Here is a 1026-residue protein sequence, read N- to C-terminus: Retinoblastoma-related protein 1 (1026 aa).

Residues 416–616 form a domain A region; it reads TPVSTAMTTA…EKGSSMYNSL (201 aa). The segment at 416–872 is pocket; sequence TPVSTAMTTA…NEVFIPSVKP (457 aa). The tract at residues 617–737 is spacer; that stretch reads AVARPALSVE…PGGGGETCAE (121 aa). A disordered region spans residues 656–680; the sequence is PVPSLPKPEPMSAQNGDPRSPKRPC. The domain B stretch occupies residues 738–872; sequence TGISVFFSKI…NEVFIPSVKP (135 aa). Positions 1007 to 1026 are disordered; that stretch reads QNGSSASSSGAPLKSEQPDS.

Belongs to the retinoblastoma protein (RB) family.

It localises to the nucleus. Its function is as follows. Regulator of biological processes that recruits a histone deacetylase to control gene transcription. May play a role in the entry into mitosis, negatively regulating the cell proliferation. Formation of stable complexes with geminiviridae replication-associated proteins may create a cellular environment which favors viral DNA replication. In Pisum sativum (Garden pea), this protein is Retinoblastoma-related protein 1 (RBR1).